The chain runs to 247 residues: Ubiquinone biosynthesis O-methyltransferase (247 aa).

R45, G65, D86, and L130 together coordinate S-adenosyl-L-methionine.

The protein belongs to the methyltransferase superfamily. UbiG/COQ3 family.

It carries out the reaction a 3-demethylubiquinol + S-adenosyl-L-methionine = a ubiquinol + S-adenosyl-L-homocysteine + H(+). It catalyses the reaction a 3-(all-trans-polyprenyl)benzene-1,2-diol + S-adenosyl-L-methionine = a 2-methoxy-6-(all-trans-polyprenyl)phenol + S-adenosyl-L-homocysteine + H(+). The protein operates within cofactor biosynthesis; ubiquinone biosynthesis. Its function is as follows. O-methyltransferase that catalyzes the 2 O-methylation steps in the ubiquinone biosynthetic pathway. This is Ubiquinone biosynthesis O-methyltransferase from Alkalilimnicola ehrlichii (strain ATCC BAA-1101 / DSM 17681 / MLHE-1).